The primary structure comprises 201 residues: Ras-related protein Rab-9B (201 aa).

GTP contacts are provided by Val-18, Gly-19, Lys-20, Ser-21, Ser-22, Asp-33, Ser-34, Ala-36, His-38, and Thr-39. Ser-21 provides a ligand contact to Mg(2+). The Switch 1 motif lies at 31–42 (KFDSQAFHTIGV). Ser-34 bears the Phosphoserine mark. Thr-39 and Asp-62 together coordinate Mg(2+). A Switch 2 motif is present at residues 64 to 78 (AGQERFKSLRTPFYR). Residues Gly-65, Asn-124, Lys-125, Ala-155, and Lys-156 each coordinate GTP. S-geranylgeranyl cysteine attachment occurs at residues Cys-200 and Cys-201.

This sequence belongs to the small GTPase superfamily. Rab family. As to quaternary structure, interacts (GTP-bound form) with SGSM1; the GDP-bound form has much lower affinity for SGSM1. The GTP-bound form but not the GDP-bound form interacts with HPS4 and the BLOC-3 complex (heterodimer of HPS1 and HPS4) but does not interact with HPS1 alone. Interacts (GTP-bound form) with NDE1. Mg(2+) serves as cofactor. As to expression, ubiquitous.

The protein localises to the cell membrane. It is found in the cytoplasmic vesicle. The protein resides in the phagosome. Its subcellular location is the phagosome membrane. It carries out the reaction GTP + H2O = GDP + phosphate + H(+). With respect to regulation, regulated by guanine nucleotide exchange factors (GEFs) which promote the exchange of bound GDP for free GTP. Regulated by GTPase activating proteins (GAPs) which increase the GTP hydrolysis activity. Inhibited by GDP dissociation inhibitors (GDIs). The small GTPases Rab are key regulators of intracellular membrane trafficking, from the formation of transport vesicles to their fusion with membranes. Rabs cycle between an inactive GDP-bound form and an active GTP-bound form that is able to recruit to membranes different sets of downstream effectors directly responsible for vesicle formation, movement, tethering and fusion. RAB9B is involved in the transport of proteins between the endosomes and the trans Golgi network. May use NDE1/NDEL1 as an effector to interact with the dynein motor complex in order to control retrograde trafficking of RAB9-associated late endosomes to the TGN. The protein is Ras-related protein Rab-9B of Homo sapiens (Human).